We begin with the raw amino-acid sequence, 79 residues long: Small ribosomal subunit protein uS17 (79 aa).

It belongs to the universal ribosomal protein uS17 family. In terms of assembly, part of the 30S ribosomal subunit.

One of the primary rRNA binding proteins, it binds specifically to the 5'-end of 16S ribosomal RNA. This chain is Small ribosomal subunit protein uS17, found in Bartonella henselae (strain ATCC 49882 / DSM 28221 / CCUG 30454 / Houston 1) (Rochalimaea henselae).